Consider the following 122-residue polypeptide: Small ribosomal subunit protein uS13 (122 aa).

A disordered region spans residues Arg-93–Lys-122.

The protein belongs to the universal ribosomal protein uS13 family. Part of the 30S ribosomal subunit. Forms a loose heterodimer with protein S19. Forms two bridges to the 50S subunit in the 70S ribosome.

Its function is as follows. Located at the top of the head of the 30S subunit, it contacts several helices of the 16S rRNA. In the 70S ribosome it contacts the 23S rRNA (bridge B1a) and protein L5 of the 50S subunit (bridge B1b), connecting the 2 subunits; these bridges are implicated in subunit movement. Contacts the tRNAs in the A and P-sites. The polypeptide is Small ribosomal subunit protein uS13 (Corynebacterium urealyticum (strain ATCC 43042 / DSM 7109)).